A 498-amino-acid polypeptide reads, in one-letter code: L-xylulose/3-keto-L-gulonate kinase (498 aa).

It belongs to the FGGY kinase family. In terms of assembly, homodimer.

It carries out the reaction L-xylulose + ATP = L-xylulose 5-phosphate + ADP + H(+). The enzyme catalyses 3-dehydro-L-gulonate + ATP = 3-dehydro-L-gulonate 6-phosphate + ADP + H(+). Its function is as follows. Catalyzes the phosphorylation of L-xylulose and 3-keto-L-gulonate. Is involved in L-lyxose utilization via xylulose, and may also be involved in the utilization of 2,3-diketo-L-gulonate. The polypeptide is L-xylulose/3-keto-L-gulonate kinase (lyx) (Escherichia coli (strain K12)).